The chain runs to 770 residues: Serine/threonine-protein kinase PLK4 (770 aa).

The region spanning 14-267 (YEVQHLLGKG…LEHVLRHPFL (254 aa)) is the Protein kinase domain. Residues 20-28 (LGKGGFASV) and Lys43 each bind ATP. Asp138 functions as the Proton acceptor in the catalytic mechanism. Residues 383 to 500 (EERISVPPLN…DRFVGLVKSK (118 aa)) enclose the Cryptic POLO box 1 (CPB1) domain. A Cryptic POLO box 2 (CPB2) domain is found at 501 to 604 (TPKVTYFSAL…GRRPVTEVQP (104 aa)). A POLO box domain is found at 662–741 (PIKRINLPDI…LPHIQLKLKT (80 aa)).

It belongs to the protein kinase superfamily. Ser/Thr protein kinase family. CDC5/Polo subfamily. In terms of assembly, homodimer. Post-translationally, ubiquitinated by the SCF(Slimb) ubiquitin ligase complex; leading to its degradation by the proteasome during interphase and regulating centriole number and ensuring the block to centriole reduplication.

It is found in the cytoplasm. It localises to the cytoskeleton. Its subcellular location is the microtubule organizing center. The protein localises to the centrosome. The protein resides in the centriole. It carries out the reaction L-seryl-[protein] + ATP = O-phospho-L-seryl-[protein] + ADP + H(+). It catalyses the reaction L-threonyl-[protein] + ATP = O-phospho-L-threonyl-[protein] + ADP + H(+). Serine/threonine-protein kinase that plays a central role in centriole duplication. Able to trigger procentriole formation on the surface of the mother centriole cylinder, using mother centriole as a platform, leading to the recruitment of centriole biogenesis proteins such as sas-6. When overexpressed, it is able to induce centrosome amplification through the simultaneous generation of multiple procentrioles adjoining each parental centriole during S phase. Centrosome amplification following overexpression can initiate tumorigenesis, highlighting the importance of centrosome regulation in cancers. This is Serine/threonine-protein kinase PLK4 (SAK) from Drosophila ananassae (Fruit fly).